The chain runs to 487 residues: FAD-dependent oxidoreductase domain-containing protein 1 (487 aa).

The helical transmembrane segment at 62-82 threads the bilayer; the sequence is EQADVVIIGGGILGLSVAFWL.

In terms of assembly, associates with components of the mitochondrial respiratory chain complex I. The cofactor is FAD.

Its subcellular location is the mitochondrion inner membrane. Required for the assembly of the mitochondrial membrane respiratory chain NADH dehydrogenase (Complex I). Involved in mid-late stages of complex I assembly. The polypeptide is FAD-dependent oxidoreductase domain-containing protein 1 (Foxred1) (Mus musculus (Mouse)).